A 334-amino-acid polypeptide reads, in one-letter code: Glycerol-1-phosphate dehydrogenase [NAD(P)+] (334 aa).

NAD(+) is bound by residues 77–81 and 99–102; these read GRPID and TTAS. Aspartate 104 is a substrate binding site. Serine 108 provides a ligand contact to NAD(+). Aspartate 147 lines the substrate pocket. Residues aspartate 147 and histidine 225 each coordinate Zn(2+). Histidine 229 contributes to the substrate binding site. Zn(2+) is bound at residue histidine 246.

The protein belongs to the glycerol-1-phosphate dehydrogenase family. The cofactor is Zn(2+).

It is found in the cytoplasm. The enzyme catalyses sn-glycerol 1-phosphate + NAD(+) = dihydroxyacetone phosphate + NADH + H(+). It carries out the reaction sn-glycerol 1-phosphate + NADP(+) = dihydroxyacetone phosphate + NADPH + H(+). Its pathway is membrane lipid metabolism; glycerophospholipid metabolism. Functionally, catalyzes the NAD(P)H-dependent reduction of dihydroxyacetonephosphate (DHAP or glycerone phosphate) to glycerol 1-phosphate (G1P). The G1P thus generated is used as the glycerophosphate backbone of phospholipids in the cellular membranes of Archaea. The chain is Glycerol-1-phosphate dehydrogenase [NAD(P)+] from Methanococcus maripaludis (strain C7 / ATCC BAA-1331).